Consider the following 399-residue polypeptide: Tryptophan synthase beta chain (399 aa).

Lys-92 carries the post-translational modification N6-(pyridoxal phosphate)lysine.

The protein belongs to the TrpB family. As to quaternary structure, tetramer of two alpha and two beta chains. Requires pyridoxal 5'-phosphate as cofactor.

The catalysed reaction is (1S,2R)-1-C-(indol-3-yl)glycerol 3-phosphate + L-serine = D-glyceraldehyde 3-phosphate + L-tryptophan + H2O. It participates in amino-acid biosynthesis; L-tryptophan biosynthesis; L-tryptophan from chorismate: step 5/5. Functionally, the beta subunit is responsible for the synthesis of L-tryptophan from indole and L-serine. This chain is Tryptophan synthase beta chain, found in Bordetella petrii (strain ATCC BAA-461 / DSM 12804 / CCUG 43448).